A 219-amino-acid polypeptide reads, in one-letter code: Chalcone--flavanone isomerase (219 aa).

Positions 50, 115, and 192 each coordinate substrate.

It belongs to the chalcone isomerase family.

The enzyme catalyses a chalcone = a flavanone.. It functions in the pathway secondary metabolite biosynthesis; flavonoid biosynthesis. Functionally, catalyzes the intramolecular cyclization of bicyclic chalcones into tricyclic (S)-flavanones. Responsible for the isomerization of 4,2',4',6'-tetrahydroxychalcone (also termed chalcone) into naringenin. The chain is Chalcone--flavanone isomerase (CHI) from Pyrus communis (Pear).